A 155-amino-acid polypeptide reads, in one-letter code: Nuclear cap-binding protein subunit 2 (155 aa).

Residues Tyr-19, Tyr-42, 111–115 (RTDWD), 122–126 (RQYGR), and 132–133 (QV) each bind mRNA. Residues 39–117 (ATLYVGNLSF…RIIRTDWDAG (79 aa)) enclose the RRM domain. A disordered region spans residues 121 to 155 (GRQYGRGKSGGQVRDEYRQDYDPARGGYGKMVQKS). Residues 133–143 (VRDEYRQDYDP) show a composition bias toward basic and acidic residues.

The protein belongs to the RRM NCBP2 family. Component of the nuclear cap-binding complex (CBC), a heterodimer composed of ncbp1/cbp80 and ncbp2/cbp20 that interacts with m7GpppG-capped RNA.

It is found in the nucleus. The protein localises to the cytoplasm. Component of the cap-binding complex (CBC), which binds co-transcriptionally to the 5' cap of pre-mRNAs and is involved in various processes such as pre-mRNA splicing, translation regulation, nonsense-mediated mRNA decay, RNA-mediated gene silencing (RNAi) by microRNAs (miRNAs) and mRNA export. The CBC complex is involved in mRNA export from the nucleus, leading to the recruitment of the mRNA export machinery to the 5' end of mRNA and to mRNA export in a 5' to 3' direction through the nuclear pore. The CBC complex is also involved in mediating U snRNA and intronless mRNAs export from the nucleus. The CBC complex is essential for a pioneer round of mRNA translation, before steady state translation when the CBC complex is replaced by cytoplasmic cap-binding protein eIF4E. The pioneer round of mRNA translation mediated by the CBC complex plays a central role in nonsense-mediated mRNA decay (NMD), NMD only taking place in mRNAs bound to the CBC complex, but not on eIF4E-bound mRNAs. The CBC complex enhances NMD in mRNAs containing at least one exon-junction complex (EJC), promoting the interaction between upf1 and upf2. The CBC complex is also involved in 'failsafe' NMD, which is independent of the EJC complex, while it does not participate in Staufen-mediated mRNA decay (SMD). During cell proliferation, the CBC complex is also involved in microRNAs (miRNAs) biogenesis via its interaction with srrt/ars2, thereby being required for miRNA-mediated RNA interference. The CBC complex also acts as a negative regulator of parn, thereby acting as an inhibitor of mRNA deadenylation. In the CBC complex, ncbp2/cbp20 recognizes and binds capped RNAs (m7GpppG-capped RNA) but requires ncbp1/cbp80 to stabilize the movement of its N-terminal loop and lock the CBC into a high affinity cap-binding state with the cap structure. The conventional cap-binding complex with NCBP2 binds both small nuclear RNA (snRNA) and messenger (mRNA) and is involved in their export from the nucleus. The protein is Nuclear cap-binding protein subunit 2 (ncbp2) of Danio rerio (Zebrafish).